Consider the following 521-residue polypeptide: MDEAVDVTTESNSLIKAVYQSRLRLTRLLLEGGAYINESNDRGETPLMIACKTKHVDHQSVSKVKMIKYLLENNADPNIQDKFGKTALMHACLENAGAEVVSLLLESGADPSLQDHTGFSALVYAVNSEDKETLRILLNACKAKGKEVIIITKDKSASGKQTTRQYLNVPPSPGIEGNNSPSPCTSPSDIELKTSPAPISNALETEKELFNFKEAASSCGFKGSSQPGSPTKKPHLSHVGGKLPLLQRLHSEPWLKIPPSLLHQHKVSSLQEELQDITPDEELSLQMNELMFSKRYFTRHQSIDVKDASHLLKTFDTAGARKLSYDEIHSHSIYPEANPNRPETLPVDQEPDLMHSISVSSLKSIVQRRNLGANHYSSDSQLTTRAGPAAAEDSKSLLEKKKMLCPQPLLTGSRESLESISVTALSRRNHAILERRGSGALLLDHIAHTRPGFLPPLNVNPHPPIPDISIHSKLISSGTKSLIPSAPHVPKEPKSKKMLLRRHSMHTEQIKQLMNLEEIFG.

4 ANK repeats span residues 9-38 (TESN…YINE), 42-79 (RGET…DPNI), 83-113 (FGKT…DPSL), and 117-146 (TGFS…AKGK). Residues 161–188 (QTTRQYLNVPPSPGIEGNNSPSPCTSPS) are disordered. Polar residues predominate over residues 177–188 (GNNSPSPCTSPS).

It belongs to the ANKRD34 family.

It localises to the cytoplasm. The protein resides in the nucleus. The sequence is that of Ankyrin repeat domain-containing protein 34B (ankrd34b) from Xenopus laevis (African clawed frog).